A 332-amino-acid chain; its full sequence is NADH-quinone oxidoreductase subunit H (332 aa).

Helical transmembrane passes span 4–24, 44–64, 78–98, 120–140, 165–185, 194–214, 255–275, 279–299, and 312–332; these read FAFF…IFAS, IGPD…MIKL, FIFA…LAAI, VALL…FLGG, VGAL…LVDI, FSWL…ALFI, IAGA…FWII, IMMI…RAAF, and YLIL…AVLL.

Belongs to the complex I subunit 1 family. As to quaternary structure, NDH-1 is composed of 14 different subunits. Subunits NuoA, H, J, K, L, M, N constitute the membrane sector of the complex.

The protein resides in the cell inner membrane. It catalyses the reaction a quinone + NADH + 5 H(+)(in) = a quinol + NAD(+) + 4 H(+)(out). In terms of biological role, NDH-1 shuttles electrons from NADH, via FMN and iron-sulfur (Fe-S) centers, to quinones in the respiratory chain. The immediate electron acceptor for the enzyme in this species is believed to be ubiquinone. Couples the redox reaction to proton translocation (for every two electrons transferred, four hydrogen ions are translocated across the cytoplasmic membrane), and thus conserves the redox energy in a proton gradient. This subunit may bind ubiquinone. In Campylobacter jejuni subsp. doylei (strain ATCC BAA-1458 / RM4099 / 269.97), this protein is NADH-quinone oxidoreductase subunit H.